Consider the following 66-residue polypeptide: U1-theraphotoxin-Cg1b (66 aa).

Residues 1 to 21 (MKTSALFVIFGLVLLFCNSFA) form the signal peptide. A propeptide spanning residues 22-29 (AELKTTGR) is cleaved from the precursor. 3 disulfide bridges follow: Cys-31–Cys-46, Cys-38–Cys-51, and Cys-45–Cys-58.

It belongs to the neurotoxin 10 (Hwtx-1) family. 46 (Jztx-7/10/12) subfamily. Expressed by the venom gland.

It localises to the secreted. Probable ion channel inhibitor. The polypeptide is U1-theraphotoxin-Cg1b (Chilobrachys guangxiensis (Chinese earth tiger tarantula)).